Consider the following 1555-residue polypeptide: MSAPLGPRGRPAPTPAASQPPPQPEMPDLSHLTEEERKIIQAVMDRQKKEEEKEQSVLKKLHQQFEMYKEQVKKMGEESQQQQEQKGDAPTCGICHKTKFADGCGHNCSYCQTKFCARCGGRVSLRSNKVMWVCNLCRKQQEILTKSGAWFYNSGSNTPQQPDQKALRGLRSEEAPQEKKAKLHEQTQFQGPPGDSSVPAVERGRAHGLTRQDSIKNGSGMKHQIASDMPSDRKRSPSVSRDQNRRYDQSEEREEYSQYVPSDSTMPRSPSDYADRRSQREPQFYEEPDHLNYRDSNRRGHRHSKEYIVDDEDVESRDEYERQRREEEYQARYRSDPNLARYPVKPQPYEEQMRIHAEVSRARHERRHSDVSLANAELEDSRISLLRMDRPSRQRSVSERRAAMENQRSYSMERTREAQGQSSYPQRTTNHSPPTPRRSPIPLDRPELRRADSLRKQHHLDPSSAVRKTKREKMETMLRNDSLSSDQSESVRPPPPRPHKSKKGGKMRQVSLSSSEEELASTPEYTSCDDVEIESESVGEKGDMEYSWLEHASWHSSEASPMSLHPVTWQPSKDGDRLIGRILLNKRLKDGSVPRDSGAMLGLKVVGGKMTESGRLCAFITKVKKGSLADTVGHLRPGDEVLEWNGRLLQGATFEEVYNIILESKPEPQVELVVSRPIGDMPRIPDSTHAQLESSSSSFESQKMDRPSISVTSPMSPGMLRDVPQFLSGQLSSQSLSRRTTPFVPRVQIKLWFDKVGHQLIVTILGAKDLPSREDGRPRNPYVKIYFLPDRSDKNKRRTKTVKKTLEPKWNQTFIYSPVHRREFRERMLEITLWDQARVREEESEFLGEILIELETALLDDEPHWYKLQTHDVSSLPLPHPSPYMPRRQLHGESPTRRLQRSKRISDSEVSDYDCEDGVGVVSDYRHDGRDLQSSTLSVPEQVMSSNHCSPSGSPHRVDVIGRTRSWSPSVPPPQRNVEQGLRGTRATGHYNTISRMDRHRVMDDHYSSERDSHFLTLPRSRHRQTSEHHHRDGRDCEAADRQPYHRSRSTEQRPLLERTTTRSRSSERADTNLMRSMPSLMTGRSAPPSPALSRSHPRTGSVQTSPSSTPVTGRRGRQLPQLPPKGTLERMITEDMDSTRKRNSGAMDIEERNRQMKLNKYKQVAGSDPRLEQDYHSKYRSGWDPHRGADTVSTKSSDSDVSDVSAVSRTSSASRFSSTSYMSVQSERPRGNRKISVFTSKMQSRQMGVSGKSMAKSTSISGDMCSLEKNDGSQSDTAVGALGTSGKKRRSSIGAKMVAIVGLSRKSRSASQLSQTEGGGKKLRSTVQRSTETGLAVEMRNWMTRQASRESTDGSMNSYSSEGNLIFPGVRLASDSQFSDFLDGLGPAQLVGRQTLATPAMGDIQVGMMDKKGQLEVEIIRARGLVVKPGSKTLPAPYVKVYLLDNGVCIAKKKTKVARKTLEPLYQQLLSFEESPQGKVLQIIVWGDYGRMDHKSFMGVAQILLDELELSNMVIGWFKLFPPSSLVDPTLAPLTRRASQSSLESSTGPSYSRS.

The tract at residues 1-35 is disordered; the sequence is MSAPLGPRGRPAPTPAASQPPPQPEMPDLSHLTEE. Pro residues predominate over residues 10 to 25; it reads RPAPTPAASQPPPQPE. The 129-residue stretch at 26–154 folds into the RabBD domain; sequence MPDLSHLTEE…TKSGAWFYNS (129 aa). An FYVE-type zinc finger spans residues 86–142; that stretch reads KGDAPTCGICHKTKFADGCGHNCSYCQTKFCARCGGRVSLRSNKVMWVCNLCRKQQE. The Zn(2+) site is built by cysteine 92, cysteine 95, cysteine 108, cysteine 111, cysteine 116, cysteine 119, cysteine 134, and cysteine 137. Over residues 154-163 the composition is skewed to polar residues; it reads SGSNTPQQPD. Positions 154-530 are disordered; sequence SGSNTPQQPD…STPEYTSCDD (377 aa). A compositionally biased stretch (basic and acidic residues) spans 170 to 185; sequence LRSEEAPQEKKAKLHE. Residues 259–268 show a composition bias toward polar residues; it reads YVPSDSTMPR. Basic and acidic residues-rich tracts occupy residues 287 to 298, 317 to 335, 351 to 370, and 379 to 403; these read EPDHLNYRDSNR, RDEYERQRREEEYQARYRS, EQMRIHAEVSRARHERRHSD, and EDSRISLLRMDRPSRQRSVSERRAA. Residue serine 369 is modified to Phosphoserine. Residues 418 to 432 show a composition bias toward polar residues; that stretch reads AQGQSSYPQRTTNHS. Basic and acidic residues predominate over residues 444 to 461; it reads DRPELRRADSLRKQHHLD. Positions 479 to 490 are enriched in polar residues; the sequence is RNDSLSSDQSES. The span at 497-506 shows a compositional bias: basic residues; the sequence is RPHKSKKGGK. In terms of domain architecture, PDZ spans 590–676; sequence DGSVPRDSGA…EPQVELVVSR (87 aa). Position 611 is a phosphothreonine (threonine 611). A disordered region spans residues 682-716; it reads PRIPDSTHAQLESSSSSFESQKMDRPSISVTSPMS. Serine 713 and serine 716 each carry phosphoserine. The 124-residue stretch at 743 to 866 folds into the C2 1 domain; the sequence is FVPRVQIKLW…ALLDDEPHWY (124 aa). Disordered regions lie at residues 877–913, 935–1145, 1180–1207, 1268–1288, and 1307–1332; these read PLPHPSPYMPRRQLHGESPTRRLQRSKRISDSEVSDY, STLS…KRNS, YRSGWDPHRGADTVSTKSSDSDVSDVSA, LEKNDGSQSDTAVGALGTSGK, and KSRSASQLSQTEGGGKKLRSTVQRST. Residues 935-953 show a composition bias toward polar residues; it reads STLSVPEQVMSSNHCSPSG. Composition is skewed to basic and acidic residues over residues 996–1014 and 1025–1071; these read RMDRHRVMDDHYSSERDSH and QTSE…ERAD. The segment covering 1092-1114 has biased composition (low complexity); sequence ALSRSHPRTGSVQTSPSSTPVTG. The residue at position 1106 (serine 1106) is a Phosphoserine. Composition is skewed to basic and acidic residues over residues 1128–1141 and 1180–1190; these read TLERMITEDMDSTR and YRSGWDPHRGA. Residues serine 1200 and serine 1276 each carry the phosphoserine modification. Residues 1401–1519 enclose the C2 2 domain; the sequence is AMGDIQVGMM…ELSNMVIGWF (119 aa). Residues serine 1540 and serine 1543 each carry the phosphoserine modification.

Heterodimer with PCLO. Part of a ternary complex involving PCLO and EPAC2. Interacts with RAB3C, RAB3D and RAB26. Binds RAB3A and RAB3B that have been activated by GTP-binding. Interacts with TSPOAP1 and RIMBP2. Interacts with PPFIA3 and PPFIA4. Interacts via its zinc finger with the first C2 domain of UNC13A. Forms a complex consisting of UNC13A, RIMS2 and RAB3A. As to expression, highly expressed in hippocampus, brain cortex, cerebellum and olfactory bulb. Detected at intermediate levels in midbrain, hindbrain and spinal cord, and at low levels in testis.

It localises to the cell membrane. Its subcellular location is the synapse. The protein localises to the presynaptic cell membrane. Rab effector involved in exocytosis. May act as scaffold protein. Plays a role in dendrite formation by melanocytes. The sequence is that of Regulating synaptic membrane exocytosis protein 2 (Rims2) from Rattus norvegicus (Rat).